The primary structure comprises 220 residues: Iron-sulfur cluster repair protein YtfE (220 aa).

This sequence belongs to the RIC family. YtfE subfamily. As to quaternary structure, homodimer.

The protein localises to the cytoplasm. Its function is as follows. Di-iron-containing protein involved in the repair of iron-sulfur clusters damaged by oxidative and nitrosative stress conditions. This is Iron-sulfur cluster repair protein YtfE from Escherichia coli (strain SMS-3-5 / SECEC).